Consider the following 234-residue polypeptide: Purine nucleoside phosphorylase DeoD-type (234 aa).

Residue histidine 5 participates in a purine D-ribonucleoside binding. Phosphate contacts are provided by residues glycine 21, arginine 25, arginine 44, and 88 to 91 (RVGT). A purine D-ribonucleoside contacts are provided by residues 178–180 (EME) and 202–203 (SD). Aspartate 203 serves as the catalytic Proton donor.

The protein belongs to the PNP/UDP phosphorylase family. In terms of assembly, homohexamer; trimer of homodimers.

It catalyses the reaction a purine D-ribonucleoside + phosphate = a purine nucleobase + alpha-D-ribose 1-phosphate. The catalysed reaction is a purine 2'-deoxy-D-ribonucleoside + phosphate = a purine nucleobase + 2-deoxy-alpha-D-ribose 1-phosphate. Functionally, catalyzes the reversible phosphorolytic breakdown of the N-glycosidic bond in the beta-(deoxy)ribonucleoside molecules, with the formation of the corresponding free purine bases and pentose-1-phosphate. The sequence is that of Purine nucleoside phosphorylase DeoD-type from Lactococcus lactis subsp. lactis (strain IL1403) (Streptococcus lactis).